The following is a 66-amino-acid chain: Phylloseptin-B1 (66 aa).

Residues 1–22 form the signal peptide; sequence MAFLKKSLFLVLFLGLVSLSIC. Residues 23-46 constitute a propeptide that is removed on maturation; the sequence is EEEKRETEEKEYDQGEDDKSEEKR. Leucine 65 is modified (leucine amide).

This sequence belongs to the frog skin active peptide (FSAP) family. Phylloseptin subfamily. Expressed by the skin glands.

The protein resides in the secreted. It is found in the target cell membrane. Its function is as follows. Antimicrobial peptide with activity against only a few strains of Gram-positive bacteria (S.aureus and B.megaterium). Acts in a synergistic effect in combination with Plasticin-B1 at doses that are not active alone. The sequence is that of Phylloseptin-B1 from Phyllomedusa bicolor (Two-colored leaf frog).